Consider the following 499-residue polypeptide: Cytochrome P450 ARB_01131 (499 aa).

Residues 1–21 (MLSLIVACLVLPLICYKLVRS) form the signal peptide. N-linked (GlcNAc...) asparagine glycosylation is present at asparagine 23. Cysteine 437 contacts heme.

Belongs to the cytochrome P450 family. Heme is required as a cofactor.

In terms of biological role, together with an NADPH cytochrome P450 the enzyme system catalyzes the terminal hydroxylation as the first step in the assimilation of alkanes and fatty acids. This is Cytochrome P450 ARB_01131 from Arthroderma benhamiae (strain ATCC MYA-4681 / CBS 112371) (Trichophyton mentagrophytes).